The primary structure comprises 64 residues: Small ribosomal subunit protein bS21 (64 aa).

This sequence belongs to the bacterial ribosomal protein bS21 family.

The sequence is that of Small ribosomal subunit protein bS21 from Anaeromyxobacter dehalogenans (strain 2CP-1 / ATCC BAA-258).